Reading from the N-terminus, the 126-residue chain is Small ribosomal subunit protein uS13 (126 aa).

Residues Pro96 to Lys126 form a disordered region. A compositionally biased stretch (basic residues) spans Gln100 to Lys126.

It belongs to the universal ribosomal protein uS13 family. In terms of assembly, part of the 30S ribosomal subunit. Forms a loose heterodimer with protein S19. Forms two bridges to the 50S subunit in the 70S ribosome.

In terms of biological role, located at the top of the head of the 30S subunit, it contacts several helices of the 16S rRNA. In the 70S ribosome it contacts the 23S rRNA (bridge B1a) and protein L5 of the 50S subunit (bridge B1b), connecting the 2 subunits; these bridges are implicated in subunit movement. Contacts the tRNAs in the A and P-sites. The chain is Small ribosomal subunit protein uS13 from Thermosynechococcus vestitus (strain NIES-2133 / IAM M-273 / BP-1).